The following is a 285-amino-acid chain: Alpha-acetolactate decarboxylase (285 aa).

Residues 1-25 (MKKNIITSITSLALVAGLSLTAFAA) form the signal peptide.

This sequence belongs to the alpha-acetolactate decarboxylase family.

It catalyses the reaction (2S)-2-acetolactate + H(+) = (R)-acetoin + CO2. It functions in the pathway polyol metabolism; (R,R)-butane-2,3-diol biosynthesis; (R,R)-butane-2,3-diol from pyruvate: step 2/3. In terms of biological role, converts acetolactate into acetoin, which can be excreted by the cells. This may be a mechanism for controlling the internal pH of cells in the stationary stage. The polypeptide is Alpha-acetolactate decarboxylase (aldB) (Brevibacillus brevis (Bacillus brevis)).